Consider the following 4427-residue polypeptide: Dynein axonemal heavy chain 2 (4427 aa).

Positions 1 to 73 (MSSKAEKKQR…AQSEESVEPE (73 aa)) are disordered. The segment at 1-1764 (MSSKAEKKQR…VIRQTNTQFQ (1764 aa)) is stem. Over residues 14–23 (RGSSQASWSG) the composition is skewed to polar residues. Residues 50–59 (LPKEEPEPRL) are compositionally biased toward basic and acidic residues. The TPR 1 repeat unit spans residues 1404–1439 (EDNQVALSTMKASRFVKAFEKDVDHWERCLSLILEV). AAA stretches follow at residues 1765–1986 (YNYE…LLRY), 2046–2273 (ETVE…DNCK), 2378–2625 (RYPP…VFQG), and 2722–2974 (EYNL…LRRH). ATP contacts are provided by residues 1803–1810 (GPAGTGKT), 2084–2091 (GCTGSGKT), and 2416–2423 (GPVGTGKT). A TPR 2 repeat occupies 2721-2754 (NEYNLSPSVVPMQLVLFREAIEHITRIVRVIGQP). Position 2762 to 2769 (2762 to 2769 (GIGGSGRQ)) interacts with ATP. A stalk region spans residues 2989–3272 (YKKLLGEKRQ…EELRKKSEEM (284 aa)). Positions 3012-3049 (FKIDETREKVQVMSLELEDAKKKVAEFQKQCEEYLVII) form a coiled coil. The stretch at 3072–3105 (VEEIKCQALADNAQKDLEEALPALEEAMRALESL) is one TPR 3 repeat. Coiled coils occupy residues 3216 to 3304 (KRIR…EEDL) and 3523 to 3567 (VRKE…GSLL). 2 AAA regions span residues 3358-3588 (LCNP…EVTE) and 3804-4023 (VTSF…LLSL). 2 TPR repeats span residues 4072–4104 (STPF…LLPG) and 4105–4140 (MDPP…QPQI).

This sequence belongs to the dynein heavy chain family. Part of the axonemal inner dynein arm complex that consists of at least two heavy chains and a number of intermediate and light chains. Interacts with DNAI4. As to expression, expressed primarily in trachea and testis, 2 tissues containing axonemal structures. Also expressed in lung. Expressed in spermatozoa (at protein level).

It localises to the cytoplasm. The protein resides in the cytoskeleton. It is found in the cilium axoneme. Its subcellular location is the flagellum axoneme. Functionally, as part of the axonemal inner dynein arm complex plays a central role in ciliary beat. Expressed in sperm flagellum, it is required for sperm motility. Dyneins are microtubule-based molecular motors possessing ATPase activities that can convert the chemical energy of ATP into relative sliding between adjacent microtubule doublets to generate ciliary bending. The protein is Dynein axonemal heavy chain 2 of Homo sapiens (Human).